Here is a 386-residue protein sequence, read N- to C-terminus: Innexin unc-9 (386 aa).

4 helical membrane-spanning segments follow: residues 33–53 (TAII…GFPI), 103–123 (QWVP…TIVW), 197–217 (FLYI…IFLL), and 282–302 (IFLF…CSLF).

Belongs to the pannexin family. Heterooligomer of unc-7 and unc-9. Interacts with F-actin. Expressed in PLM neurons (at protein level). Expressed in the nerve ring.

It localises to the cell membrane. It is found in the cell junction. The protein resides in the gap junction. Structural component of gap junctions. Plays a role in maintaining gap junction activity to promote locomotion. This Caenorhabditis elegans protein is Innexin unc-9.